The primary structure comprises 66 residues: UPF0370 protein YpfN (66 aa).

A helical membrane pass occupies residues 4-24 (LAKYWWILVLVFLVGVLLNVI). Residues 39–66 (KPELPPHRDFNDKWDDEEDWPKKDQPKK) form a disordered region. Positions 42-51 (LPPHRDFNDK) are enriched in basic and acidic residues.

The protein belongs to the UPF0370 family.

The protein resides in the cell membrane. The polypeptide is UPF0370 protein YpfN (Salmonella paratyphi A (strain AKU_12601)).